The sequence spans 332 residues: Adenosine deaminase (332 aa).

Zn(2+)-binding residues include histidine 12 and histidine 14. Histidine 14, aspartate 16, and glycine 170 together coordinate substrate. Residue histidine 197 coordinates Zn(2+). Glutamate 200 functions as the Proton donor in the catalytic mechanism. Residue aspartate 278 participates in Zn(2+) binding.

The protein belongs to the metallo-dependent hydrolases superfamily. Adenosine and AMP deaminases family. Adenosine deaminase subfamily. The cofactor is Zn(2+).

The enzyme catalyses adenosine + H2O + H(+) = inosine + NH4(+). It carries out the reaction 2'-deoxyadenosine + H2O + H(+) = 2'-deoxyinosine + NH4(+). Catalyzes the hydrolytic deamination of adenosine and 2-deoxyadenosine. The chain is Adenosine deaminase from Clostridium perfringens (strain SM101 / Type A).